The sequence spans 101 residues: NADH-quinone oxidoreductase subunit K (101 aa).

The next 3 helical transmembrane spans lie at 4–24 (LAHY…GIFL), 30–50 (IIIL…FVAF), and 61–81 (IFVF…LAIL).

The protein belongs to the complex I subunit 4L family. NDH-1 is composed of 14 different subunits. Subunits NuoA, H, J, K, L, M, N constitute the membrane sector of the complex.

Its subcellular location is the cell inner membrane. The catalysed reaction is a quinone + NADH + 5 H(+)(in) = a quinol + NAD(+) + 4 H(+)(out). Functionally, NDH-1 shuttles electrons from NADH, via FMN and iron-sulfur (Fe-S) centers, to quinones in the respiratory chain. The immediate electron acceptor for the enzyme in this species is believed to be ubiquinone. Couples the redox reaction to proton translocation (for every two electrons transferred, four hydrogen ions are translocated across the cytoplasmic membrane), and thus conserves the redox energy in a proton gradient. This chain is NADH-quinone oxidoreductase subunit K, found in Paraburkholderia xenovorans (strain LB400).